The following is a 73-amino-acid chain: Translation initiation factor IF-1 (73 aa).

Residues 1-73 (MPKKEGVIEI…TRGRIVYRYK (73 aa)) form the S1-like domain.

It belongs to the IF-1 family. As to quaternary structure, component of the 30S ribosomal translation pre-initiation complex which assembles on the 30S ribosome in the order IF-2 and IF-3, IF-1 and N-formylmethionyl-tRNA(fMet); mRNA recruitment can occur at any time during PIC assembly.

The protein localises to the cytoplasm. In terms of biological role, one of the essential components for the initiation of protein synthesis. Stabilizes the binding of IF-2 and IF-3 on the 30S subunit to which N-formylmethionyl-tRNA(fMet) subsequently binds. Helps modulate mRNA selection, yielding the 30S pre-initiation complex (PIC). Upon addition of the 50S ribosomal subunit IF-1, IF-2 and IF-3 are released leaving the mature 70S translation initiation complex. In Nocardioides sp. (strain ATCC BAA-499 / JS614), this protein is Translation initiation factor IF-1.